The primary structure comprises 253 residues: Porin thermoregulatory protein EnvY (253 aa).

Residues D149–K246 form the HTH araC/xylS-type domain. 2 consecutive DNA-binding regions (H-T-H motif) follow at residues R166–N187 and I213–Y236.

In terms of biological role, influences the temperature-dependent expression of several E.coli envelope proteins, most notably the porins OmpF and OmpC and the lambda receptor, LamB. This chain is Porin thermoregulatory protein EnvY (envY), found in Escherichia coli (strain K12).